The sequence spans 533 residues: uncharacterized protein (533 aa).

Composition is skewed to polar residues over residues 30–43 (SQQG…VKNH), 79–91 (NAGT…THLS), 231–247 (NVKS…SSSA), and 254–263 (GRQSNSPNSN). Disordered regions lie at residues 30–92 (SQQG…HLSA) and 221–274 (SLSP…PGAS). Phosphoserine is present on S336. The interval 475 to 510 (HPSLSNSAASPPVSSPGLRRSHIPVHEGLKHTRDGV) is disordered. Over residues 476–490 (PSLSNSAASPPVSSP) the composition is skewed to low complexity. Positions 498–510 (PVHEGLKHTRDGV) are enriched in basic and acidic residues.

The protein resides in the nucleus. This is an uncharacterized protein from Schizosaccharomyces pombe (strain 972 / ATCC 24843) (Fission yeast).